Consider the following 319-residue polypeptide: HTH-type transcriptional regulator YidZ (319 aa).

An HTH lysR-type domain is found at 8 to 65; that stretch reads LDLNLLLCLQLLMQERSVTKAAKRMNVTPSAVSKSLAKLRAWFDDPLFVNSPLGLSPT. Positions 25–44 form a DNA-binding region, H-T-H motif; the sequence is VTKAAKRMNVTPSAVSKSLA.

The protein belongs to the LysR transcriptional regulatory family.

Involved in anaerobic NO protection. The protein is HTH-type transcriptional regulator YidZ of Escherichia coli O17:K52:H18 (strain UMN026 / ExPEC).